The primary structure comprises 373 residues: Superinfection exclusion protein (373 aa).

A signal peptide spans 1–15; sequence MIVLLILSLACTAFT.

It belongs to the serpin family. Orthopoxvirus OPG040 subfamily. As to quaternary structure, interacts with A56 protein.

The protein resides in the virion membrane. The protein localises to the host cell membrane. Prevents cell to cell fusion via its interaction with A56 protein. The A56-K2 complex associates with components of the entry fusion complex (EFC) presumably to avoid superinfection and syncytium formation. This chain is Superinfection exclusion protein (OPG040), found in Homo sapiens (Human).